A 186-amino-acid polypeptide reads, in one-letter code: Dihydrofolate reductase (186 aa).

In terms of domain architecture, DHFR spans 2–180 (RLNVVVAVSE…FTFKFCVYDV (179 aa)). Residues alanine 8 and 14–20 (GIGKGGG) contribute to the NADP(+) site. 28–33 (DMEFFK) is a substrate binding site. Position 51–53 (51–53 (RVT)) interacts with NADP(+). Arginine 67 serves as a coordination point for substrate. NADP(+) is bound by residues 73–75 (SST) and 112–119 (GGYRLYKE).

It belongs to the dihydrofolate reductase family. As to quaternary structure, monomer.

It catalyses the reaction (6S)-5,6,7,8-tetrahydrofolate + NADP(+) = 7,8-dihydrofolate + NADPH + H(+). The protein operates within cofactor biosynthesis; tetrahydrofolate biosynthesis; 5,6,7,8-tetrahydrofolate from 7,8-dihydrofolate: step 1/1. Its function is as follows. Key enzyme in folate metabolism. Contributes to the de novo mitochondrial thymidylate biosynthesis pathway. Catalyzes an essential reaction for de novo glycine and purine synthesis, and for DNA precursor synthesis. The protein is Dihydrofolate reductase of Schistosoma mansoni (Blood fluke).